Consider the following 447-residue polypeptide: Na(+)-translocating NADH-quinone reductase subunit A (447 aa).

It belongs to the NqrA family. In terms of assembly, composed of six subunits; NqrA, NqrB, NqrC, NqrD, NqrE and NqrF.

The catalysed reaction is a ubiquinone + n Na(+)(in) + NADH + H(+) = a ubiquinol + n Na(+)(out) + NAD(+). NQR complex catalyzes the reduction of ubiquinone-1 to ubiquinol by two successive reactions, coupled with the transport of Na(+) ions from the cytoplasm to the periplasm. NqrA to NqrE are probably involved in the second step, the conversion of ubisemiquinone to ubiquinol. The polypeptide is Na(+)-translocating NADH-quinone reductase subunit A (Yersinia pestis bv. Antiqua (strain Angola)).